The primary structure comprises 480 residues: Transposase for transposon Tn552 (480 aa).

Residues 36 to 55 (LSSISKSKGIALSTLYRWNK) constitute a DNA-binding region (H-T-H motif). One can recognise an Integrase catalytic domain in the interval 155-341 (ESSRPNEIWQ…TPINRWNSNH (187 aa)). The disordered stretch occupies residues 438–480 (RKHLKQNIASPSTTDLIKEEKSYGYSPQETTKNVKKLKRYRND). Positions 470-480 (NVKKLKRYRND) are enriched in basic residues.

This chain is Transposase for transposon Tn552, found in Staphylococcus aureus.